A 316-amino-acid chain; its full sequence is Peroxisomal targeting signal 2 receptor (316 aa).

6 WD repeats span residues 56-96, 102-142, 145-185, 188-228, 232-272, and 277-316; these read DTRD…GGRP, EHTK…SLKT, EHRY…SLNT, AHDH…RPTT, GHTY…DPII, and HHTEFVVGLDWNMFIDGQMASCSWDEQVCVWNLGRPGQFR.

It belongs to the WD repeat peroxin-7 family. As to quaternary structure, interacts with PEX5; interaction only takes place when PEX7 is associated with cargo proteins.

The protein resides in the cytoplasm. The protein localises to the cytosol. It localises to the peroxisome matrix. Functionally, receptor required for the peroxisomal import of proteins containing a C-terminal PTS2-type peroxisomal targeting signal. Specifically binds to cargo proteins containing a PTS2 peroxisomal targeting signal in the cytosol. Cargo protein-binding triggers interaction with PEX5 and formation of a ternary complex composed of PEX5 and PEX7 along with PTS2-containing cargo proteins, which is tranlocated into peroxisomes by passing through the PEX13-PEX14 docking complex. The protein is Peroxisomal targeting signal 2 receptor (pex7) of Dictyostelium discoideum (Social amoeba).